The primary structure comprises 431 residues: Na(+)-translocating NADH-quinone reductase subunit F (431 aa).

A helical membrane pass occupies residues Phe-9–Leu-29. The region spanning His-39–Tyr-133 is the 2Fe-2S ferredoxin-type domain. [2Fe-2S] cluster-binding residues include Cys-76, Cys-82, Cys-85, and Cys-117. Positions Ala-136–Lys-286 constitute an FAD-binding FR-type domain. Positions Asp-289–Leu-413 are catalytic.

Belongs to the NqrF family. Composed of six subunits; NqrA, NqrB, NqrC, NqrD, NqrE and NqrF. Requires [2Fe-2S] cluster as cofactor. FAD is required as a cofactor.

The protein localises to the cell inner membrane. It catalyses the reaction a ubiquinone + n Na(+)(in) + NADH + H(+) = a ubiquinol + n Na(+)(out) + NAD(+). Functionally, NQR complex catalyzes the reduction of ubiquinone-1 to ubiquinol by two successive reactions, coupled with the transport of Na(+) ions from the cytoplasm to the periplasm. The first step is catalyzed by NqrF, which accepts electrons from NADH and reduces ubiquinone-1 to ubisemiquinone by a one-electron transfer pathway. This Chlamydia pneumoniae (Chlamydophila pneumoniae) protein is Na(+)-translocating NADH-quinone reductase subunit F.